The sequence spans 301 residues: D-alanine--D-alanine ligase (301 aa).

The region spanning 102-295 (KAVFAAAGLP…FPALCAWMVE (194 aa)) is the ATP-grasp domain. 128 to 181 (PLPRPYVIKPVNEGSSVGVFILREGDNRRADIARAWRHGSVAMTEEYVPGRELT) contributes to the ATP binding site. Positions 248, 262, and 264 each coordinate Mg(2+).

It belongs to the D-alanine--D-alanine ligase family. The cofactor is Mg(2+). Requires Mn(2+) as cofactor.

It is found in the cytoplasm. The catalysed reaction is 2 D-alanine + ATP = D-alanyl-D-alanine + ADP + phosphate + H(+). The protein operates within cell wall biogenesis; peptidoglycan biosynthesis. Functionally, cell wall formation. The polypeptide is D-alanine--D-alanine ligase (Acidiphilium cryptum (strain JF-5)).